The following is an 87-amino-acid chain: Small ribosomal subunit protein bS20 (87 aa).

Over residues 1–11 (MAHHKSAIKRI) the composition is skewed to basic residues. A disordered region spans residues 1–26 (MAHHKSAIKRIKQNEKRNARNRHQKS).

The protein belongs to the bacterial ribosomal protein bS20 family.

Functionally, binds directly to 16S ribosomal RNA. The chain is Small ribosomal subunit protein bS20 from Trichlorobacter lovleyi (strain ATCC BAA-1151 / DSM 17278 / SZ) (Geobacter lovleyi).